The sequence spans 364 residues: Chorismate synthase (364 aa).

R48 is a binding site for NADP(+). FMN is bound by residues 131-133 (RSS), 243-244 (NA), G288, 303-307 (KPTSS), and R329.

Belongs to the chorismate synthase family. Homotetramer. It depends on FMNH2 as a cofactor.

The enzyme catalyses 5-O-(1-carboxyvinyl)-3-phosphoshikimate = chorismate + phosphate. Its pathway is metabolic intermediate biosynthesis; chorismate biosynthesis; chorismate from D-erythrose 4-phosphate and phosphoenolpyruvate: step 7/7. Catalyzes the anti-1,4-elimination of the C-3 phosphate and the C-6 proR hydrogen from 5-enolpyruvylshikimate-3-phosphate (EPSP) to yield chorismate, which is the branch point compound that serves as the starting substrate for the three terminal pathways of aromatic amino acid biosynthesis. This reaction introduces a second double bond into the aromatic ring system. This is Chorismate synthase from Brucella anthropi (strain ATCC 49188 / DSM 6882 / CCUG 24695 / JCM 21032 / LMG 3331 / NBRC 15819 / NCTC 12168 / Alc 37) (Ochrobactrum anthropi).